A 320-amino-acid polypeptide reads, in one-letter code: Nicotianamine synthase 2 (320 aa).

The protein belongs to the nicotianamine synthase (NAS)-like family.

It carries out the reaction 3 S-adenosyl-L-methionine = nicotianamine + 3 S-methyl-5'-thioadenosine + 3 H(+). Its function is as follows. Synthesizes nicotianamine, a polyamine which serves as a sensor for the physiological iron status within the plant, and/or might be involved in the transport of iron. This Arabidopsis thaliana (Mouse-ear cress) protein is Nicotianamine synthase 2 (NAS2).